A 359-amino-acid chain; its full sequence is Phosphate acyltransferase (359 aa).

Belongs to the PlsX family. As to quaternary structure, homodimer. Probably interacts with PlsY.

Its subcellular location is the cytoplasm. The catalysed reaction is a fatty acyl-[ACP] + phosphate = an acyl phosphate + holo-[ACP]. The protein operates within lipid metabolism; phospholipid metabolism. In terms of biological role, catalyzes the reversible formation of acyl-phosphate (acyl-PO(4)) from acyl-[acyl-carrier-protein] (acyl-ACP). This enzyme utilizes acyl-ACP as fatty acyl donor, but not acyl-CoA. The polypeptide is Phosphate acyltransferase (Citrobacter koseri (strain ATCC BAA-895 / CDC 4225-83 / SGSC4696)).